Here is a 208-residue protein sequence, read N- to C-terminus: Glutathione S-transferase (208 aa).

A GST N-terminal domain is found at 1 to 78 (MSYKLTYFPI…HLARKFNLNG (78 aa)). Residues Tyr7, Lys42, 49-50 (QL), and 62-63 (QS) each bind glutathione. One can recognise a GST C-terminal domain in the interval 80 to 200 (NNAETSYVDM…YCAKRNASKM (121 aa)).

This sequence belongs to the GST superfamily. Pi family. As to quaternary structure, homodimer.

The enzyme catalyses RX + glutathione = an S-substituted glutathione + a halide anion + H(+). Its function is as follows. Conjugation of reduced glutathione to a wide number of exogenous and endogenous hydrophobic electrophiles. The sequence is that of Glutathione S-transferase from Dirofilaria immitis (Canine heartworm).